A 156-amino-acid chain; its full sequence is Small ribosomal subunit protein uS7 (156 aa).

The protein belongs to the universal ribosomal protein uS7 family. As to quaternary structure, part of the 30S ribosomal subunit. Contacts proteins S9 and S11.

In terms of biological role, one of the primary rRNA binding proteins, it binds directly to 16S rRNA where it nucleates assembly of the head domain of the 30S subunit. Is located at the subunit interface close to the decoding center, probably blocks exit of the E-site tRNA. This is Small ribosomal subunit protein uS7 from Nitrosococcus oceani (strain ATCC 19707 / BCRC 17464 / JCM 30415 / NCIMB 11848 / C-107).